A 254-amino-acid polypeptide reads, in one-letter code: Tumor necrosis factor ligand superfamily member 9 (254 aa).

Topologically, residues 1-28 (MEYASDASLDPEAPWPPAPRARACRVLP) are cytoplasmic. The chain crosses the membrane as a helical; Signal-anchor for type II membrane protein span at residues 29-49 (WALVAGLLLLLLLAAACAVFL). The Extracellular portion of the chain corresponds to 50 to 254 (ACPWAVSGAR…PAGLPSPRSE (205 aa)). Residues 91–240 (MFAQLVAQNV…GATVLGLFRV (150 aa)) enclose the THD domain.

Belongs to the tumor necrosis factor family. In terms of assembly, homotrimer. As to expression, expressed in brain, placenta, lung, skeletal muscle and kidney.

The protein resides in the membrane. In terms of biological role, cytokine that binds to TNFRSF9. Induces the proliferation of activated peripheral blood T-cells. May have a role in activation-induced cell death (AICD). May play a role in cognate interactions between T-cells and B-cells/macrophages. The sequence is that of Tumor necrosis factor ligand superfamily member 9 (TNFSF9) from Homo sapiens (Human).